A 209-amino-acid polypeptide reads, in one-letter code: Ribosomal RNA large subunit methyltransferase E (209 aa).

S-adenosyl-L-methionine is bound by residues Gly-63, Trp-65, Asp-83, Asp-99, and Asp-124. Lys-164 serves as the catalytic Proton acceptor.

Belongs to the class I-like SAM-binding methyltransferase superfamily. RNA methyltransferase RlmE family.

The protein localises to the cytoplasm. The catalysed reaction is uridine(2552) in 23S rRNA + S-adenosyl-L-methionine = 2'-O-methyluridine(2552) in 23S rRNA + S-adenosyl-L-homocysteine + H(+). Functionally, specifically methylates the uridine in position 2552 of 23S rRNA at the 2'-O position of the ribose in the fully assembled 50S ribosomal subunit. The chain is Ribosomal RNA large subunit methyltransferase E from Tolumonas auensis (strain DSM 9187 / NBRC 110442 / TA 4).